A 172-amino-acid chain; its full sequence is Immune protein Tsi1 (172 aa).

The first 19 residues, 1-19 (MKLLAGSFAALFLSLSAQA), serve as a signal peptide directing secretion. Cystine bridges form between C22-C167, C79-C121, and C147-C155.

In terms of assembly, forms a heterotetramer with Tse1 consisting of two Tse1 dimers and two Tsi1 dimers. Formation of the complex inactivates Tse1 enzymatic activity.

Its function is as follows. Immunity protein that plays a role in preventing early activation of toxin Tse1. Binds to a large surface of Tse1 and thereby occludes the active site to specifically inhibits enzyme activity by forming a hydrogen bond with the catalytic diad. In Pseudomonas aeruginosa (strain ATCC 15692 / DSM 22644 / CIP 104116 / JCM 14847 / LMG 12228 / 1C / PRS 101 / PAO1), this protein is Immune protein Tsi1.